Consider the following 559-residue polypeptide: Pentatricopeptide repeat-containing protein At4g38010 (559 aa).

PPR repeat units lie at residues serine 70 to proline 104, aspartate 105 to aspartate 139, aspartate 140 to arginine 170, aspartate 171 to glutamate 201, asparagine 203 to arginine 233, serine 238 to lysine 268, aspartate 269 to proline 304, aspartate 305 to tryptophan 339, aspartate 340 to lysine 370, asparagine 371 to proline 405, asparagine 406 to leucine 440, and lysine 443 to lysine 473. Positions isoleucine 478 to phenylalanine 554 are type E motif.

This sequence belongs to the PPR family. PCMP-E subfamily.

This Arabidopsis thaliana (Mouse-ear cress) protein is Pentatricopeptide repeat-containing protein At4g38010 (PCMP-E45).